We begin with the raw amino-acid sequence, 149 residues long: Transcription antitermination protein NusB (149 aa).

This sequence belongs to the NusB family.

Functionally, involved in transcription antitermination. Required for transcription of ribosomal RNA (rRNA) genes. Binds specifically to the boxA antiterminator sequence of the ribosomal RNA (rrn) operons. The protein is Transcription antitermination protein NusB of Sphingopyxis alaskensis (strain DSM 13593 / LMG 18877 / RB2256) (Sphingomonas alaskensis).